A 335-amino-acid polypeptide reads, in one-letter code: Nucleoid-associated protein YejK (335 aa).

The protein belongs to the YejK family.

It is found in the cytoplasm. The protein localises to the nucleoid. In Shigella sonnei (strain Ss046), this protein is Nucleoid-associated protein YejK.